The primary structure comprises 151 residues: Small ribosomal subunit protein bS6 (151 aa).

Positions 98 to 151 (EESPIQKAEKENRERKNRAERRAAEAAAATETEKSESEESAEEETSTDTTGEEE) are disordered. Residues 135–151 (EESAEEETSTDTTGEEE) show a composition bias toward acidic residues.

This sequence belongs to the bacterial ribosomal protein bS6 family.

In terms of biological role, binds together with bS18 to 16S ribosomal RNA. The sequence is that of Small ribosomal subunit protein bS6 from Teredinibacter turnerae (strain ATCC 39867 / T7901).